Reading from the N-terminus, the 300-residue chain is NAD kinase (300 aa).

The active-site Proton acceptor is Asp77. Residues 77–78 (DG), 151–152 (ND), His162, Arg179, Asp181, and 192–197 (TAYSLS) contribute to the NAD(+) site.

The protein belongs to the NAD kinase family. The cofactor is a divalent metal cation.

The protein localises to the cytoplasm. It catalyses the reaction NAD(+) + ATP = ADP + NADP(+) + H(+). Its function is as follows. Involved in the regulation of the intracellular balance of NAD and NADP, and is a key enzyme in the biosynthesis of NADP. Catalyzes specifically the phosphorylation on 2'-hydroxyl of the adenosine moiety of NAD to yield NADP. This chain is NAD kinase, found in Cellvibrio japonicus (strain Ueda107) (Pseudomonas fluorescens subsp. cellulosa).